The primary structure comprises 901 residues: Aconitate hydratase A (901 aa).

The [4Fe-4S] cluster site is built by Cys443, Cys509, and Cys512.

The protein belongs to the aconitase/IPM isomerase family. Monomer. It depends on [4Fe-4S] cluster as a cofactor.

It catalyses the reaction citrate = D-threo-isocitrate. The catalysed reaction is (2S,3R)-3-hydroxybutane-1,2,3-tricarboxylate = 2-methyl-cis-aconitate + H2O. It functions in the pathway carbohydrate metabolism; tricarboxylic acid cycle; isocitrate from oxaloacetate: step 2/2. It participates in organic acid metabolism; propanoate degradation. Involved in the catabolism of short chain fatty acids (SCFA) via the tricarboxylic acid (TCA)(acetyl degradation route) and probably the 2-methylcitrate cycle I (propionate degradation route). Catalyzes the reversible isomerization of citrate to isocitrate via cis-aconitate. Could catalyze the hydration of 2-methyl-cis-aconitate to yield (2R,3S)-2-methylisocitrate. The apo form of AcnA functions as a RNA-binding regulatory protein. This Staphylococcus aureus (strain MRSA252) protein is Aconitate hydratase A (acnA).